The primary structure comprises 413 residues: Serpin A12 (413 aa).

The signal sequence occupies residues 1–20; it reads MTRMLDLGLFLAGLLTVKGL. N-linked (GlcNAc...) asparagine glycans are attached at residues asparagine 92 and asparagine 267. The tract at residues 364–382 is reactive center loop; sequence GMEGAAGSGAQTLPMETPR.

It belongs to the serpin family. As to quaternary structure, forms a stable complex with KLK7. In terms of processing, glycosylation slightly decreases affinity for heparin, but otherwise has no significant effect on KLK7 inhibitory activity or thermal stability of the protein. In terms of tissue distribution, expressed in visceral adipose tissues.

It is found in the secreted. Its activity is regulated as follows. Inhibition of KLK7 is enhanced by heparin. In terms of biological role, adipokine that modulates insulin action by specifically inhibiting its target protease KLK7 in white adipose tissues. In Mus musculus (Mouse), this protein is Serpin A12 (Serpina12).